Consider the following 240-residue polypeptide: Peptidyl-tRNA hydrolase 2 (240 aa).

Y60 is a binding site for tRNA. The active-site Proton acceptor is H65. Positions 111, 113, and 159 each coordinate tRNA.

It belongs to the PTH family. In terms of assembly, monomer.

It localises to the cytoplasm. It carries out the reaction an N-acyl-L-alpha-aminoacyl-tRNA + H2O = an N-acyl-L-amino acid + a tRNA + H(+). Hydrolyzes ribosome-free peptidyl-tRNAs (with 1 or more amino acids incorporated), which drop off the ribosome during protein synthesis, or as a result of ribosome stalling. Its function is as follows. Catalyzes the release of premature peptidyl moieties from peptidyl-tRNA molecules trapped in stalled 50S ribosomal subunits, and thus maintains levels of free tRNAs and 50S ribosomes. The protein is Peptidyl-tRNA hydrolase 2 of Corynebacterium jeikeium (strain K411).